The primary structure comprises 138 residues: NADH-quinone oxidoreductase subunit A 1 (138 aa).

Helical transmembrane passes span 19-39, 74-94, and 103-123; these read FLPL…LLLA, FYLI…IFAW, and LAGL…LVWL.

This sequence belongs to the complex I subunit 3 family. In terms of assembly, NDH-1 is composed of 14 different subunits. Subunits NuoA, H, J, K, L, M, N constitute the membrane sector of the complex.

The protein resides in the cell inner membrane. It carries out the reaction a quinone + NADH + 5 H(+)(in) = a quinol + NAD(+) + 4 H(+)(out). In terms of biological role, NDH-1 shuttles electrons from NADH, via FMN and iron-sulfur (Fe-S) centers, to quinones in the respiratory chain. The immediate electron acceptor for the enzyme in this species is believed to be ubiquinone. Couples the redox reaction to proton translocation (for every two electrons transferred, four hydrogen ions are translocated across the cytoplasmic membrane), and thus conserves the redox energy in a proton gradient. The polypeptide is NADH-quinone oxidoreductase subunit A 1 (Geobacter metallireducens (strain ATCC 53774 / DSM 7210 / GS-15)).